A 2115-amino-acid polypeptide reads, in one-letter code: Nuclear mitotic apparatus protein 1 (2115 aa).

Positions methionine 1 to proline 212 are head (Globular). Serine 162 carries the post-translational modification Phosphoserine. Position 163 is a phosphothreonine (threonine 163). A phosphoserine mark is found at serine 169 and serine 203. Position 211 is a phosphothreonine (threonine 211). A coiled-coil region spans residues glutamine 213–lysine 1699. A Phosphoserine modification is found at serine 271. N6-acetyllysine is present on lysine 379. Phosphoserine is present on residues serine 388 and serine 395. Low complexity predominate over residues leucine 549–leucine 560. Disordered stretches follow at residues leucine 549–glutamate 593 and leucine 746–glycine 766. Residues lysine 561–histidine 581 show a composition bias toward basic and acidic residues. Serine 820 carries the post-translational modification Phosphoserine. Lysine 891 carries the N6-acetyllysine modification. 2 stretches are compositionally biased toward basic and acidic residues: residues alanine 926 to glutamate 950 and glutamine 996 to arginine 1013. Disordered regions lie at residues alanine 926–arginine 958 and leucine 988–arginine 1013. A Phosphothreonine; by PLK1 modification is found at threonine 1047. A compositionally biased stretch (basic and acidic residues) spans leucine 1090–alanine 1102. 2 disordered regions span residues leucine 1090 to serine 1225 and glutamate 1275 to serine 1296. Composition is skewed to low complexity over residues serine 1103–alanine 1112 and glutamate 1133–glutamine 1142. Positions serine 1145–alanine 1163 are enriched in basic and acidic residues. At serine 1187 the chain carries Phosphoserine. Residues lysine 1198–asparagine 1224 show a composition bias toward basic and acidic residues. Position 1225 is a phosphoserine (serine 1225). The segment covering alanine 1283–serine 1296 has biased composition (basic and acidic residues). The residue at position 1511 (lysine 1511) is an N6-acetyllysine. The residue at position 1601 (serine 1601) is a Phosphoserine. Residue lysine 1699 forms a Glycyl lysine isopeptide (Lys-Gly) (interchain with G-Cter in SUMO2) linkage. Positions lysine 1699–tyrosine 1876 are membrane-binding domain 1. Positions phenylalanine 1700 to histidine 2115 are tail (Globular). A phosphoserine mark is found at serine 1721, serine 1724, and serine 1728. Residues proline 1734–glutamine 1761 are disordered. Positions leucine 1735 to glycine 1748 are enriched in polar residues. The short motif at proline 1742 to glycine 1748 is the Tankyrase-binding domain element. 2 positions are modified to phosphoserine: serine 1757 and serine 1760. Residue lysine 1766 forms a Glycyl lysine isopeptide (Lys-Gly) (interchain with G-Cter in SUMO1); alternate linkage. Lysine 1766 is covalently cross-linked (Glycyl lysine isopeptide (Lys-Gly) (interchain with G-Cter in SUMO2); alternate). 2 positions are modified to phosphoserine; by PLK1: serine 1769 and serine 1772. Phosphotyrosine is present on tyrosine 1774. A Phosphothreonine modification is found at threonine 1776. A Phosphoserine modification is found at serine 1788. The tract at residues serine 1788 to arginine 1810 is 4.1-binding domain. Phosphoserine; by PLK1 is present on serine 1789. A phosphoserine mark is found at serine 1792 and serine 1800. Threonine 1804 bears the Phosphothreonine mark. Lysine 1822 is covalently cross-linked (Glycyl lysine isopeptide (Lys-Gly) (interchain with G-Cter in SUMO2)). 2 disordered regions span residues glutamate 1826–serine 1901 and glutamate 1955–histidine 2115. Phosphoserine is present on residues serine 1830 and serine 1833. Residues serine 1830–leucine 1857 show a composition bias toward polar residues. Serine 1834 carries the post-translational modification Phosphoserine; by PLK1. Tyrosine 1836 is subject to Phosphotyrosine. Serine 1840 carries the post-translational modification Phosphoserine. A Phosphoserine; alternate modification is found at serine 1844. A glycan (O-linked (GlcNAc) serine; alternate) is linked at serine 1844. Residues serine 1862 and serine 1887 each carry the phosphoserine modification. The span at threonine 1879–valine 1891 shows a compositional bias: polar residues. The tract at residues serine 1882–glutamine 1985 is tubulin-binding domain. Positions serine 1892–arginine 1926 are GPSM2-binding domain. Residues glutamate 1955–arginine 1966 are compositionally biased toward basic and acidic residues. Position 1969 is a phosphoserine (serine 1969). The segment at isoleucine 1981 to glycine 2060 is membrane-binding domain 2. The Nuclear localization signal motif lies at arginine 1984–arginine 1989. A Phosphoserine modification is found at serine 1991. Threonine 2000 carries the phosphothreonine modification. A Phosphoserine modification is found at serine 2003. Threonine 2015 carries the post-translational modification Phosphothreonine; by CDK1. The span at threonine 2015–lysine 2032 shows a compositional bias: basic and acidic residues. Residue serine 2047 is modified to Phosphoserine. Threonine 2055 bears the Phosphothreonine; by CDK1 mark. Phosphoserine occurs at positions 2062 and 2077. Serine 2087 bears the Phosphoserine; by CDK1 mark. Positions arginine 2089 to arginine 2108 are enriched in low complexity. Residue threonine 2106 is modified to Phosphothreonine; by CDK1.

Homodimer. Also forms multiarm oligomers by association of C-terminal tail domains, oligomers may further assemble to form a hexagonal nuclear lattice-like network. Associates with the dynein-dynactin complex; this association promotes the transport and accumulation of NUMA1 at the mitotic spindle poles that is inhibited by the BRISC complex in a PLK1-dependent manner. Part of a spindle orientation complex at least composed of GNAI1, GPSM2 and NUMA1. Interacts (via C-terminus) with microtubules (MTs); this interaction is direct and promotes both MT bundle formation and stability in a dynein-dynactin complex- and CDK1-independent manner. Interacts with EPB41 and EPB41L2; these interactions are negatively regulated by CDK1 during metaphase and are important for anaphase-specific localization of NUMA1 in symmetrically dividing cells. Interacts (via C-terminus) with GPSM2 (via TPR repeats); this interaction is direct, prevented by competitive binding of INSC, is inhibited in a PLK1-dependent manner, blocks the association of NUMA1 with MTs and inhibits NUMA1-induced MT bundle formation, prevents the association of NUMA1 with SPAG5, induces mitotic spindle pole localization of GPSM2, both metaphase cell cortex localization of NUMA1 and mitotic spindle organization. Does not interact with GPSM2 during anaphase. Interacts (via C-terminus) with the nuclear importin alpha/importin beta receptor; this interaction is inhibited by RanGTP. Interacts (via C-terminus) with KPNB1; this interaction is inhibited by RanGTP and the BRISC complex. Interacts with ABRAXAS2 and the BRISC complex; these interactions regulate mitotic spindle assembly. Interacts (via N-terminal end of the coiled-coil domain) with RAE1; this interaction promotes mitotic spindle formation. Interacts (via C-terminus) with SPAG5 (via C-terminus); this interaction promotes the recruitment of SPAG5 to the MTs at spindle poles in a dynein-dynactin-dependent manner and regulates mitotic spindle organization and proper chromosome alignment during mitosis. Interacts with TNKS; this interaction occurs at the onset of mitosis. Interacts with TNKS2. Interacts with tubulin. Interacts with KHDC3L (via C-terminus). Phosphorylation and dephosphorylation on Thr-2055 regulates the extent of cortical NUMA1 and the dynein-dynactin complex localization during mitotic metaphase and anaphase. In metaphase, phosphorylation on Thr-2055 occurs in a kinase CDK1-dependent manner; this phosphorylation maintains low levels of cortical dynein-dynactin complex at metaphase, and hence proper spindle positioning. In anaphase, dephosphorylated on Thr-2055 by phosphatase PPP2CA; this dephosphorylation stimulates its membrane association and with the dynein-dynactin complex its enrichment at the cell cortex, and hence robust spindle elongation. Probably also phosphorylated on Thr-2015 and Ser-2087 by CDK1; these phosphorylations may regulate its cell cortex recruitment during metaphase and anaphase. Phosphorylated on Thr-1047, Ser-1769, Ser-1772, Ser-1789 and Ser-1834 by PLK1; these phosphorylations induce cortical dynein-dynactin complex dissociation from the NUMA1-GPSM2 complex and negatively regulates cortical dynein-dynactin complex localization. Post-translationally, ADP-ribosylated by TNKS at the onset of mitosis; ADP-ribosylation is not required for its localization to spindle poles. In terms of processing, O-glycosylated during cytokinesis at sites identical or close to phosphorylation sites, this interferes with the phosphorylation status. Ubiquitinated with 'Lys-63'-linked polyubiquitin chains. Deubiquitination by the BRISC complex is important for the incorporation of NUMA1 into mitotic spindle poles and normal spindle pole function, probably by modulating interactions between NUMA1, dynein-dynactin complex and importin-beta.

The protein resides in the nucleus. It is found in the nucleoplasm. It localises to the nucleus matrix. Its subcellular location is the chromosome. The protein localises to the cytoplasm. The protein resides in the cytoskeleton. It is found in the microtubule organizing center. It localises to the centrosome. Its subcellular location is the spindle pole. The protein localises to the cell cortex. The protein resides in the cell membrane. It is found in the lateral cell membrane. It localises to the cytosol. Its function is as follows. Microtubule (MT)-binding protein that plays a role in the formation and maintenance of the spindle poles and the alignement and the segregation of chromosomes during mitotic cell division. Functions to tether the minus ends of MTs at the spindle poles, which is critical for the establishment and maintenance of the spindle poles. Plays a role in the establishment of the mitotic spindle orientation during metaphase and elongation during anaphase in a dynein-dynactin-dependent manner. In metaphase, part of a ternary complex composed of GPSM2 and G(i) alpha proteins, that regulates the recruitment and anchorage of the dynein-dynactin complex in the mitotic cell cortex regions situated above the two spindle poles, and hence regulates the correct oritentation of the mitotic spindle. During anaphase, mediates the recruitment and accumulation of the dynein-dynactin complex at the cell membrane of the polar cortical region through direct association with phosphatidylinositol 4,5-bisphosphate (PI(4,5)P2), and hence participates in the regulation of the spindle elongation and chromosome segregation. Also binds to other polyanionic phosphoinositides, such as phosphatidylinositol 3-phosphate (PIP), lysophosphatidic acid (LPA) and phosphatidylinositol triphosphate (PIP3), in vitro. Also required for proper orientation of the mitotic spindle during asymmetric cell divisions. Plays a role in mitotic MT aster assembly. Involved in anastral spindle assembly. Positively regulates TNKS protein localization to spindle poles in mitosis. Highly abundant component of the nuclear matrix where it may serve a non-mitotic structural role, occupies the majority of the nuclear volume. Required for epidermal differentiation and hair follicle morphogenesis. In Homo sapiens (Human), this protein is Nuclear mitotic apparatus protein 1.